The following is a 117-amino-acid chain: Galanin-like peptide (117 aa).

A signal peptide spans 1-23; sequence MACSVHLVLFLTILLSLAETPES. Residues 86–117 constitute a propeptide that is removed on maturation; that stretch reads TMGETFVKANTGDMHILDKNVPKEEATLDSES.

This sequence belongs to the galanin family. As to expression, isoform 2 is found in brain, thymus and skin. Isoform 2 is found in the skin, in pericytes covering microvascular arterioles and venules on their abluminal surfaces. In larger vessels, isoform 2 is expressed in layers of smooth muscle cells. Isoform 2 is not detected in endothelial cells.

It localises to the secreted. Its function is as follows. Hypothalamic neuropeptide which binds to the G-protein-coupled galanin receptors (GALR1, GALR2 and GALR3). Involved in a large number of putative physiological functions in CNS homeostatic processes, including the regulation of gonadotropin-releasing hormone secretion. In terms of biological role, exhibits antimicrobial activity against Gram-negative bacterias, inducing bacterial membrane blebbing. Exhibits potent and dose-dependent vasoconstrictor and anti-edema activity in the cutaneous microvasculature, a physiologic effects which does not appear to be mediated via GALR1 or GALR2. The sequence is that of Galanin-like peptide (Galp) from Mus musculus (Mouse).